The sequence spans 207 residues: Large ribosomal subunit protein uL4 (207 aa).

The protein belongs to the universal ribosomal protein uL4 family. As to quaternary structure, part of the 50S ribosomal subunit.

In terms of biological role, one of the primary rRNA binding proteins, this protein initially binds near the 5'-end of the 23S rRNA. It is important during the early stages of 50S assembly. It makes multiple contacts with different domains of the 23S rRNA in the assembled 50S subunit and ribosome. Functionally, forms part of the polypeptide exit tunnel. The protein is Large ribosomal subunit protein uL4 of Geobacter sulfurreducens (strain ATCC 51573 / DSM 12127 / PCA).